The chain runs to 164 residues: Rhomboid-related protein 1 (164 aa).

4 consecutive transmembrane segments (helical) span residues 10–30 (GFNA…HGVL), 32–52 (ISLL…ITDM), 56–76 (VVGG…NVVM), and 120–140 (PSFM…LTIL). Ser60 functions as the Nucleophile in the catalytic mechanism. His125 is an active-site residue.

The protein belongs to the peptidase S54 family.

It localises to the membrane. It carries out the reaction Cleaves type-1 transmembrane domains using a catalytic dyad composed of serine and histidine that are contributed by different transmembrane domains.. In terms of biological role, may be involved in regulated intramembrane proteolysis and the subsequent release of functional polypeptides from their membrane anchors. The polypeptide is Rhomboid-related protein 1 (Rhbdl1) (Rattus norvegicus (Rat)).